The sequence spans 701 residues: Polyribonucleotide nucleotidyltransferase (701 aa).

Residues Asp485 and Asp491 each contribute to the Mg(2+) site. In terms of domain architecture, KH spans 552-611; that stretch reads PRIIKIRINPEKIRDVIGKGGAVIRALTEETGTTIDITDDGTVMIACVNAEGGELAKKRI. Residues 621–689 enclose the S1 motif domain; the sequence is GRVYDGTVLK…DKGRLRLSMK (69 aa).

It belongs to the polyribonucleotide nucleotidyltransferase family. Mg(2+) serves as cofactor.

It localises to the cytoplasm. The enzyme catalyses RNA(n+1) + phosphate = RNA(n) + a ribonucleoside 5'-diphosphate. Involved in mRNA degradation. Catalyzes the phosphorolysis of single-stranded polyribonucleotides processively in the 3'- to 5'-direction. The chain is Polyribonucleotide nucleotidyltransferase from Nitrosospira multiformis (strain ATCC 25196 / NCIMB 11849 / C 71).